Reading from the N-terminus, the 251-residue chain is Probable transcriptional regulatory protein Cgl1663/cg1872 (251 aa).

Residues 1–22 (MSGHSKWATTKHKKAANDAKRG) are disordered.

This sequence belongs to the TACO1 family.

The protein localises to the cytoplasm. In Corynebacterium glutamicum (strain ATCC 13032 / DSM 20300 / JCM 1318 / BCRC 11384 / CCUG 27702 / LMG 3730 / NBRC 12168 / NCIMB 10025 / NRRL B-2784 / 534), this protein is Probable transcriptional regulatory protein Cgl1663/cg1872.